The primary structure comprises 471 residues: FAD-linked oxidoreductase sorD (471 aa).

The first 23 residues, 1-23 (MQAASAFATCLLASVGGNSSAVA), serve as a signal peptide directing secretion. N-linked (GlcNAc...) asparagine glycans are attached at residues Asn-18, Asn-29, Asn-174, Asn-279, and Asn-351. Residues 41–212 (LLTTPSAIVW…TDFSIRTEPV (172 aa)) enclose the FAD-binding PCMH-type domain.

It belongs to the oxygen-dependent FAD-linked oxidoreductase family. The cofactor is FAD.

The protein operates within secondary metabolite biosynthesis. In terms of biological role, FAD-linked oxidoreductase; part of the gene cluster that mediates the biosynthesis of sorbicillinoids, a diverse group of yellow secondary metabolites that restrict growth of competing pathogenic fungi but not of bacteria. Sorbicillinoids biosynthesis requires the action of two PKSs. SorA iteratively combines three acetyl units and the growing chain is modified by the ketoacyl reductase subunit, and optional by the enoyl reductase subunit in the second cycle. The polyketide is then handed over to the PKS SorB, which adds three more acetyl units, and two methyl groups. SorB releases an aldehyde, which undergoes spontaneous cyclization resulting in the formation of sorbicillin or 2',3'-dihydrosorbicillin. The monooxygenase sorC oxidizes sorbicillin and 2',3'-dihydrosorbicillin to 2',3'-dihydrosorbicillinol and sorbicillinol, respectively. The oxidoreductase sorD further converts sorbicillinol into oxosorbicillinol. Sorbicillinol is the building block for the other sorbicillinoids such as disorbicillinol, bisvertinolon, and dihydrobisvertinolone. The chain is FAD-linked oxidoreductase sorD from Penicillium rubens (strain ATCC 28089 / DSM 1075 / NRRL 1951 / Wisconsin 54-1255) (Penicillium chrysogenum).